A 76-amino-acid polypeptide reads, in one-letter code: Sec-independent protein translocase protein TatA (76 aa).

A helical transmembrane segment spans residues 1-21 (MGGLSIWHWLIVLLIVALVFG). The interval 40 to 76 (KDGMKEGETPADAQQLPRSGAVDVNAKETTRSDSNKA) is disordered. Over residues 64 to 76 (NAKETTRSDSNKA) the composition is skewed to basic and acidic residues.

The protein belongs to the TatA/E family. In terms of assembly, the Tat system comprises two distinct complexes: a TatABC complex, containing multiple copies of TatA, TatB and TatC subunits, and a separate TatA complex, containing only TatA subunits. Substrates initially bind to the TatABC complex, which probably triggers association of the separate TatA complex to form the active translocon.

It is found in the cell inner membrane. Part of the twin-arginine translocation (Tat) system that transports large folded proteins containing a characteristic twin-arginine motif in their signal peptide across membranes. TatA could form the protein-conducting channel of the Tat system. The protein is Sec-independent protein translocase protein TatA of Burkholderia cenocepacia (strain HI2424).